The following is a 56-amino-acid chain: Turripeptide XIV-01 (56 aa).

The signal sequence occupies residues 1–21 (MRFHVLLTVALLLTSLMSIEA). The propeptide occupies 22 to 30 (KPVNGAEME).

In terms of processing, contains 2 disulfide bonds. In terms of tissue distribution, expressed by the venom duct.

It is found in the secreted. The polypeptide is Turripeptide XIV-01 (Gemmula speciosa (Splendid gem-turris)).